Here is a 219-residue protein sequence, read N- to C-terminus: Ribose-5-phosphate isomerase A (219 aa).

Substrate-binding positions include 28–31, 81–84, and 94–97; these read TGST, DGAD, and KGGG. The active-site Proton acceptor is glutamate 103. Residue lysine 121 participates in substrate binding.

Belongs to the ribose 5-phosphate isomerase family. In terms of assembly, homodimer.

It carries out the reaction aldehydo-D-ribose 5-phosphate = D-ribulose 5-phosphate. The protein operates within carbohydrate degradation; pentose phosphate pathway; D-ribose 5-phosphate from D-ribulose 5-phosphate (non-oxidative stage): step 1/1. Catalyzes the reversible conversion of ribose-5-phosphate to ribulose 5-phosphate. The sequence is that of Ribose-5-phosphate isomerase A from Salmonella choleraesuis (strain SC-B67).